The following is a 370-amino-acid chain: Anhydro-N-acetylmuramic acid kinase (370 aa).

Residue 12–19 (GTSLDGID) participates in ATP binding.

This sequence belongs to the anhydro-N-acetylmuramic acid kinase family.

The catalysed reaction is 1,6-anhydro-N-acetyl-beta-muramate + ATP + H2O = N-acetyl-D-muramate 6-phosphate + ADP + H(+). It participates in amino-sugar metabolism; 1,6-anhydro-N-acetylmuramate degradation. Its pathway is cell wall biogenesis; peptidoglycan recycling. Functionally, catalyzes the specific phosphorylation of 1,6-anhydro-N-acetylmuramic acid (anhMurNAc) with the simultaneous cleavage of the 1,6-anhydro ring, generating MurNAc-6-P. Is required for the utilization of anhMurNAc either imported from the medium or derived from its own cell wall murein, and thus plays a role in cell wall recycling. This is Anhydro-N-acetylmuramic acid kinase from Yersinia enterocolitica serotype O:8 / biotype 1B (strain NCTC 13174 / 8081).